A 161-amino-acid chain; its full sequence is Thy-1 membrane glycoprotein (161 aa).

An N-terminal signal peptide occupies residues 1–19; sequence MNLAISIALLLTVLQVSRG. Gln-20 is subject to Pyrrolidone carboxylic acid. The 107-residue stretch at 20 to 126 folds into the Ig-like V-type domain; it reads QKVTSLTACL…SQNVTVLRDK (107 aa). 2 disulfide bridges follow: Cys-28–Cys-130 and Cys-38–Cys-104. Residues Asn-42 and Asn-79 are each glycosylated (N-linked (GlcNAc...) asparagine). The residue at position 82 (Ser-82) is a Phosphoserine. The N-linked (GlcNAc...) asparagine glycan is linked to Asn-119. Cys-130 carries GPI-anchor amidated cysteine; alternate lipidation. A propeptide spans 131 to 161 (removed in mature form); it reads EGISLLAQNTSWLLLLLLSLSLLQATDFMSL. An N-linked (GlcNAc...) asparagine glycan is attached at Asn-139.

It is found in the cell membrane. In terms of biological role, may play a role in cell-cell or cell-ligand interactions during synaptogenesis and other events in the brain. This is Thy-1 membrane glycoprotein (THY1) from Homo sapiens (Human).